The chain runs to 365 residues: G-protein coupled receptor 4 (365 aa).

At 1–10 (MDNSTGTWEG) the chain is on the extracellular side. Residue Asn3 is glycosylated (N-linked (GlcNAc...) asparagine). The chain crosses the membrane as a helical span at residues 11–47 (CHVDSRVDHLFPPSLYIFVIGVGLPTNCLALWAAYRQ). Intrachain disulfides connect Cys11–Cys260 and Cys92–Cys170. The Cytoplasmic segment spans residues 48–51 (VRQR). Residues 52–82 (NELGVYLMNLSIADLLYICTLPLWVDYFLHH) traverse the membrane as a helical segment. The Extracellular portion of the chain corresponds to 83-87 (DNWIH). The helical transmembrane segment at 88–123 (GPGSCKLFGFIFYSNIYISIAFLCCISVDRYLAVAH) threads the bilayer. The Cytoplasmic segment spans residues 124 to 131 (PLRFARLR). A helical membrane pass occupies residues 132–158 (RVKTAVAVSSVVWATELGANSAPLFHD). The Extracellular portion of the chain corresponds to 159-174 (ELFRDRYNHTFCFEKF). The segment at 159–174 (ELFRDRYNHTFCFEKF) is extracellular loop 2 (ECL2). Asn166 is a glycosylation site (N-linked (GlcNAc...) asparagine). A helical transmembrane segment spans residues 175 to 212 (PMERWVAWMNLYRVFVGFLFPWALMLLCYRGILRAVQS). Residues 213–216 (SVST) lie on the Cytoplasmic side of the membrane. Residues 217-252 (ERQEKVKIKRLALSLIAIVLVCFAPYHALLLSRSAV) form a helical membrane-spanning segment. The Extracellular portion of the chain corresponds to 253–262 (YLGRPWDCGF). The chain crosses the membrane as a helical span at residues 263–291 (EERVFSAYHSSLAFTSLNCVADPILYCLV). Residues 292-365 (NEGARSDVAK…PLKVLLPPAQ (74 aa)) are Cytoplasmic-facing.

This sequence belongs to the G-protein coupled receptor 1 family.

The protein resides in the cell membrane. Activated by a network of residues that connects an extracellular-facing cavity to Glu-147, a conserved charged residue buried in the transmembrane core of the receptor. Protonation likely drives conformational changes in extracellular loop 2 (ECL2), which stabilizes movement of transmembrane 3 (TM3) and a series of rearrangements that connect the extracellular-facing cavity to Glu-147, a residue only conserved in proton-sensing G-protein coupled receptors. Its function is as follows. Proton-sensing G-protein coupled receptor activated by extracellular pH, which is required to monitor pH changes and generate adaptive reactions. Activated by an optimal pH of 6.8-7.2. Ligand binding causes a conformation change that triggers signaling via guanine nucleotide-binding proteins (G proteins) and modulates the activity of downstream effectors, such as adenylate cyclase. GPR4 is mainly coupled to G(s) G proteins and mediates activation of adenylate cyclase activity. May also couple with G(q) and G(12)/G(13) G proteins. Acts as a key regulator of respiratory sensitivity to CO2/H(+) in brain retrotrapezoid nucleus neurons: acts by mediating detection of protons generated by the formation of carbonic acid in the blood, an important mechanism to impulse to breathe. Also acts as a regulator of acid secretion in the kidney collecting duct by maintaining acid-base homeostasis in the kidney. Acidosis-induced GPR4 activation increases paracellular gap formation and permeability of vascular endothelial cells, possibly through the G(12)/G(13)/Rho GTPase signaling pathway. In Rattus norvegicus (Rat), this protein is G-protein coupled receptor 4.